The sequence spans 63 residues: Gallinacin-4 (63 aa).

A signal peptide spans 1–19; that stretch reads MKILCFFIVLLFVAVHGAV. Residues 20 to 25 constitute a propeptide that is removed on maturation; it reads GFSRSP. Intrachain disulfides connect C31/C59, C38/C53, and C43/C60.

Belongs to the beta-defensin family. Strong expression in the bone marrow and testis. Widely expressed. Weak expression in the ovarian stroma, but not expressed in the ovarian follicles.

The protein localises to the secreted. Its subcellular location is the cytoplasmic granule. Has bactericidal activity. Potent activity against S.typhimurium and S.entiriditis. The polypeptide is Gallinacin-4 (GAL4) (Gallus gallus (Chicken)).